The following is a 637-amino-acid chain: ATP-dependent zinc metalloprotease FtsH (637 aa).

Residues 1–44 are Cytoplasmic-facing; that stretch reads MAKHSQHSSPPRKLFDTLNDLWQRAKSEAGLSAEGPEGTRRRNN. Residues 45–65 form a helical membrane-spanning segment; that stretch reads LILYLLLVLSTLYLLNGYQTL. The Periplasmic portion of the chain corresponds to 66–141; it reads RNEEIPYSEF…TVRYGSNWFS (76 aa). The chain crosses the membrane as a helical span at residues 142 to 162; that stretch reads SLIFNWIVPIVLLTLFWTWMA. Topologically, residues 163 to 637 are cytoplasmic; the sequence is RRMTGGRGFL…VKAVIREAAS (475 aa). 231 to 238 is a binding site for ATP; the sequence is GPPGTGKT. His-454 is a binding site for Zn(2+). The active site involves Glu-455. Residues His-458 and Asp-531 each contribute to the Zn(2+) site.

In the central section; belongs to the AAA ATPase family. The protein in the C-terminal section; belongs to the peptidase M41 family. As to quaternary structure, homohexamer. Zn(2+) is required as a cofactor.

Its subcellular location is the cell inner membrane. Its function is as follows. Acts as a processive, ATP-dependent zinc metallopeptidase for both cytoplasmic and membrane proteins. Plays a role in the quality control of integral membrane proteins. In Methylococcus capsulatus (strain ATCC 33009 / NCIMB 11132 / Bath), this protein is ATP-dependent zinc metalloprotease FtsH.